Reading from the N-terminus, the 90-residue chain is Small ribosomal subunit protein uS15 (90 aa).

This sequence belongs to the universal ribosomal protein uS15 family. Part of the 30S ribosomal subunit. Forms a bridge to the 50S subunit in the 70S ribosome, contacting the 23S rRNA.

One of the primary rRNA binding proteins, it binds directly to 16S rRNA where it helps nucleate assembly of the platform of the 30S subunit by binding and bridging several RNA helices of the 16S rRNA. Functionally, forms an intersubunit bridge (bridge B4) with the 23S rRNA of the 50S subunit in the ribosome. The protein is Small ribosomal subunit protein uS15 of Campylobacter jejuni subsp. doylei (strain ATCC BAA-1458 / RM4099 / 269.97).